The chain runs to 535 residues: Transmembrane protein 151 homolog (535 aa).

3 helical membrane passes run 27 to 47, 73 to 93, and 254 to 274; these read GYGK…YATY, YNFV…MECW, and PWFL…SWPL. Residues 498 to 535 form a disordered region; sequence ASISHSSSKDLKSLTLKNNNGAANNNNNNNNENPEEQP. The span at 510–529 shows a compositional bias: low complexity; the sequence is SLTLKNNNGAANNNNNNNNE.

Belongs to the TMEM151 family.

It localises to the membrane. In Caenorhabditis briggsae, this protein is Transmembrane protein 151 homolog.